The primary structure comprises 881 residues: Probable intermembrane transport protein HI_1672 (881 aa).

Residues 30–49 traverse the membrane as a helical segment; the sequence is FWLLPFIALCIGAILFFQIV.

Belongs to the PqiB family.

Its subcellular location is the cell inner membrane. This is Probable intermembrane transport protein HI_1672 from Haemophilus influenzae (strain ATCC 51907 / DSM 11121 / KW20 / Rd).